The sequence spans 574 residues: Proline--tRNA ligase (574 aa).

It belongs to the class-II aminoacyl-tRNA synthetase family. ProS type 1 subfamily. Homodimer.

The protein localises to the cytoplasm. It carries out the reaction tRNA(Pro) + L-proline + ATP = L-prolyl-tRNA(Pro) + AMP + diphosphate. Functionally, catalyzes the attachment of proline to tRNA(Pro) in a two-step reaction: proline is first activated by ATP to form Pro-AMP and then transferred to the acceptor end of tRNA(Pro). As ProRS can inadvertently accommodate and process non-cognate amino acids such as alanine and cysteine, to avoid such errors it has two additional distinct editing activities against alanine. One activity is designated as 'pretransfer' editing and involves the tRNA(Pro)-independent hydrolysis of activated Ala-AMP. The other activity is designated 'posttransfer' editing and involves deacylation of mischarged Ala-tRNA(Pro). The misacylated Cys-tRNA(Pro) is not edited by ProRS. The chain is Proline--tRNA ligase from Teredinibacter turnerae (strain ATCC 39867 / T7901).